The primary structure comprises 320 residues: ATP-dependent 6-phosphofructokinase (320 aa).

Gly12 provides a ligand contact to ATP. ADP-binding positions include 22–26 and 55–60; these read RGVVR and RYSVSD. ATP contacts are provided by residues 73-74 and 103-106; these read RF and GDGS. Asp104 provides a ligand contact to Mg(2+). 126 to 128 serves as a coordination point for substrate; it reads TID. Catalysis depends on Asp128, which acts as the Proton acceptor. Residue Arg155 participates in ADP binding. Substrate-binding positions include Arg163 and 170 to 172; that span reads MGR. Residues 186–188, Lys212, and 214–216 contribute to the ADP site; these read GCE and KKH. Substrate is bound by residues Glu223, Arg244, and 250–253; that span reads HIQR.

It belongs to the phosphofructokinase type A (PFKA) family. ATP-dependent PFK group I subfamily. Prokaryotic clade 'B1' sub-subfamily. As to quaternary structure, homotetramer. Mg(2+) is required as a cofactor.

The protein resides in the cytoplasm. The catalysed reaction is beta-D-fructose 6-phosphate + ATP = beta-D-fructose 1,6-bisphosphate + ADP + H(+). The protein operates within carbohydrate degradation; glycolysis; D-glyceraldehyde 3-phosphate and glycerone phosphate from D-glucose: step 3/4. Its activity is regulated as follows. Allosterically activated by ADP and other diphosphonucleosides, and allosterically inhibited by phosphoenolpyruvate. Functionally, catalyzes the phosphorylation of D-fructose 6-phosphate to fructose 1,6-bisphosphate by ATP, the first committing step of glycolysis. The polypeptide is ATP-dependent 6-phosphofructokinase (Buchnera aphidicola subsp. Acyrthosiphon pisum (strain 5A)).